The primary structure comprises 576 residues: Formate--tetrahydrofolate ligase (576 aa).

64–71 serves as a coordination point for ATP; it reads TPLGEGKT.

This sequence belongs to the formate--tetrahydrofolate ligase family.

It carries out the reaction (6S)-5,6,7,8-tetrahydrofolate + formate + ATP = (6R)-10-formyltetrahydrofolate + ADP + phosphate. It participates in one-carbon metabolism; tetrahydrofolate interconversion. The sequence is that of Formate--tetrahydrofolate ligase from Aeromonas hydrophila subsp. hydrophila (strain ATCC 7966 / DSM 30187 / BCRC 13018 / CCUG 14551 / JCM 1027 / KCTC 2358 / NCIMB 9240 / NCTC 8049).